The chain runs to 386 residues: NADH kinase pos5, mitochondrial (386 aa).

A mitochondrion-targeting transit peptide spans 1-42 (MIRAANGFRISVRNTAVCLAPNFRQLKGFSIINLGSLQYFRY).

It belongs to the NAD kinase family.

It localises to the mitochondrion. The enzyme catalyses NADH + ATP = ADP + NADPH + H(+). Phosphorylates both NADH and NAD(+), with a preference for NADH. Anti-oxidant factor and key source of the cellular reductant NADPH. The sequence is that of NADH kinase pos5, mitochondrial (pos5) from Schizosaccharomyces pombe (strain 972 / ATCC 24843) (Fission yeast).